The following is a 110-amino-acid chain: UPF0060 membrane protein Swit_0423 (110 aa).

A run of 4 helical transmembrane segments spans residues 6–26, 29–49, 61–81, and 90–110; these read LFIF…FWAW, LGKS…FAWL, AFAA…WAVE, and LIGV…PRTA.

This sequence belongs to the UPF0060 family.

It is found in the cell inner membrane. The protein is UPF0060 membrane protein Swit_0423 of Rhizorhabdus wittichii (strain DSM 6014 / CCUG 31198 / JCM 15750 / NBRC 105917 / EY 4224 / RW1) (Sphingomonas wittichii).